The sequence spans 570 residues: Phosphoglucomutase 1 (570 aa).

Serine 2 carries the N-acetylserine modification. Positions 24 and 120 each coordinate alpha-D-glucose 1,6-bisphosphate. Serine 120 serves as the catalytic Phosphoserine intermediate. 4 residues coordinate Mg(2+): serine 120, aspartate 291, aspartate 293, and aspartate 295. Residue serine 120 is modified to Phosphoserine. Alpha-D-glucose 1,6-bisphosphate-binding residues include aspartate 295, arginine 296, threonine 360, glutamate 379, serine 381, and lysine 392.

This sequence belongs to the phosphohexose mutase family. In terms of assembly, monomer. Mg(2+) serves as cofactor.

It localises to the cytoplasm. The catalysed reaction is alpha-D-glucose 1-phosphate = alpha-D-glucose 6-phosphate. It carries out the reaction O-phospho-L-seryl-[protein] + alpha-D-glucose 1-phosphate = alpha-D-glucose 1,6-bisphosphate + L-seryl-[protein]. The enzyme catalyses alpha-D-glucose 1,6-bisphosphate + L-seryl-[protein] = O-phospho-L-seryl-[protein] + alpha-D-glucose 6-phosphate. Functionally, minor phosphoglucomutase isozyme that catalyzes the reversible interconversion of alpha-D-glucose 1-phosphate and alpha-D-glucose 6-phosphate. The mechanism proceeds via the intermediate compound alpha-D-glucose 1,6-bisphosphate. Constitutes about 10-20% of the phosphoglucomutase activity in the cell. Key enzyme in hexose metabolism. The forward reaction is an essential step in the energy metabolism of galactose since the product of the galactose pathway enzymes in yeast is glucose 1-phosphate. The reverse reaction is an essential step for biosynthesis when carbon sources other than galactose are the energy source because glucose 1-phosphate is the starting point for the synthesis of UDP-glucose, which acts as a precursor for the synthesis of oligosaccharides and trehalose. The sequence is that of Phosphoglucomutase 1 from Saccharomyces cerevisiae (strain ATCC 204508 / S288c) (Baker's yeast).